Consider the following 231-residue polypeptide: Cytidylate kinase (231 aa).

ATP is bound at residue 18 to 26 (GPSGTGKSS).

This sequence belongs to the cytidylate kinase family. Type 1 subfamily.

The protein resides in the cytoplasm. It catalyses the reaction CMP + ATP = CDP + ADP. It carries out the reaction dCMP + ATP = dCDP + ADP. This is Cytidylate kinase from Streptomyces coelicolor (strain ATCC BAA-471 / A3(2) / M145).